We begin with the raw amino-acid sequence, 496 residues long: Versicolorin B desaturase stcL (496 aa).

A helical membrane pass occupies residues 3-23 (FLSLPILTALGAVVYVLFQLV). A heme-binding site is contributed by Cys-440.

The protein belongs to the cytochrome P450 family. Heme is required as a cofactor.

The protein localises to the membrane. The catalysed reaction is versicolorin B + NADPH + O2 + H(+) = versicolorin A + NADP(+) + 2 H2O. The protein operates within mycotoxin biosynthesis; sterigmatocystin biosynthesis. Its function is as follows. Cytochrome P450 monooxygenase; part of the gene cluster that mediates the biosynthesis of sterigmatocystin (ST), a polyketide-derived furanocoumarin which is part of the most toxic and carcinogenic compounds among the known mycotoxins. The first step in the biosynthesis of sterigmatocystin is the production of hexanoate by the fatty acid synthase (FAS) units stcJ and stcK. The polyketide backbone is assembled by the non-reducing polyketide synthase stcA by condensation of the starter hexanoyl-CoA and 7 malonyl-CoA extender units followed by cyclization and release of norsolorinic acid. Norsolorinic acid is the first stable intermediate in the biosynthesis of sterigmatocystin and is converted into averantin (AVN) by the ketoreductase stcE which reduces the hexanoate ketone to an alcohol. Averantin is then oxidized into 5'-hydroxyaverantin (HAVN) by the cytochrome P450 monooxygenase stcF. 5'-hydroxyaverantin is further converted to 5'-oxyaverantin (OAVN) by the 5'-hydroxyaverantin dehydrogenase stcG. The next step is the conversion of OAVN into averufin (AVF) which is catalyzed by a yet to be identified enzyme. The cytochrome P450 monooxygenase stcB and the flavin-binding monooxygenase stcW are both required for the conversion of averufin to 1-hydroxyversicolorone. The esterase stcI probably catalyzes the formation of versiconal hemiacetal acetate from 1-hydroxyversicolorone. The oxydoreductase stcN then probably catalyzes the biosynthetic step from versiconal to versicolorin B (VERB). The next step is performed by the versicolorin B desaturase stcL to produce versicolorin A (VERA). The ketoreductase stcU and the cytochrome P450 monooxygenase stcS are involved in the conversion of versicolorin A to demethylsterigmatocystin. The Baeyer-Villiger oxidas stcQ and the reductase stcR might be involved in the biosynthetic step from versicolorin A to demethylsterigmatocystin. The final step in the biosynthesis of sterigmatocystin is the methylation of demethylsterigmatocystin catalyzed by the methyltransferase stcP. The sequence is that of Versicolorin B desaturase stcL from Emericella nidulans (strain FGSC A4 / ATCC 38163 / CBS 112.46 / NRRL 194 / M139) (Aspergillus nidulans).